The sequence spans 474 residues: ATP synthase subunit beta, chloroplastic (474 aa).

155-162 (GGAGVGKT) lines the ATP pocket.

Belongs to the ATPase alpha/beta chains family. As to quaternary structure, F-type ATPases have 2 components, CF(1) - the catalytic core - and CF(0) - the membrane proton channel. CF(1) has five subunits: alpha(3), beta(3), gamma(1), delta(1), epsilon(1). CF(0) has four main subunits: a(1), b(1), b'(1) and c(9-12).

The protein resides in the plastid. Its subcellular location is the chloroplast thylakoid membrane. It carries out the reaction ATP + H2O + 4 H(+)(in) = ADP + phosphate + 5 H(+)(out). Its function is as follows. Produces ATP from ADP in the presence of a proton gradient across the membrane. The catalytic sites are hosted primarily by the beta subunits. The protein is ATP synthase subunit beta, chloroplastic of Thalassiosira pseudonana (Marine diatom).